The sequence spans 913 residues: MGPFKSSVFILILHLLEGALSDSLIQLNNNGYEGIVIAIDPNVPEDETLIQQIKDMVTQASPYLFEATGKRFYFKNVAILIPETWKTKADYVRPKLETYKNADVLVAESTPSGGDEPYTEHIGKCGDQGERIHLTPHFLAGKQLKEYGPQGRAFVHEWAHLRWGVFDEYNNDEKFYLSNGRIQAVRCSVGITGKIEVNKCQGGSCYTKRCTFNKATGLYEKGCEFIPHSQQTEKASIMFAQHVDSVVEFCTEQNHNKEAPNMQNTKCNLRSTWEVIRDSEDFKKTTPTTTQPPNPTFSLLQIGQRIVCLVLDKSGSMATGNRLNRLNQAGQLFLLQIIELRSWVGMVTFDSAAHVQSELIQINSGSDRDTLTKRLPTAASGGTSICSGLRLAFTVIKKKYPTDGSEIVLLTDGEDNTISGCFNEVKQSGAIIHTVALGPSAARELEELSKMTGGLQTYASDQVQNNGLIDAFGALSSGNGVVSERSIQLESKGSTLQNSQWMNGTVIVDSTVGKDTLFLVTWTTQPPQILLWDPSGQKQDGFVVDKNTKMAFLQIPGIAKVGTWKYSLQASSQTLTLTVTSRASSATLPPITVTSKMNKDTGKFPSPMIVYANIRQGASPILRASVTALIESENGKTVTLELLDNGAGADAAKDDGVYSRYFTTYDTNGRYSVKVRALGGVNAVRRRAIPQQSGVMYIPGWIENDEIQWNPPRPEIEDDVQRKQVCFSRTSSGGSFVASGVPNAPIPDLFPPCQITDLKAEIHGHSLINLTWTAPGDDYDHGTAHKYIIRISTSILDLRDKFNESLQVNTTALIPKEANSEEVFLFKPENITFENGTDLFIAIQAVDKVDLKSEISNIARVSLFIPPQTPPETPSPDETSAPCPNISINSTIPGIHILKIMWKWIGELQLSIG.

An N-terminal signal peptide occupies residues 1 to 21 (MGPFKSSVFILILHLLEGALS). The metalloprotease domain stretch occupies residues 46-199 (DETLIQQIKD…GITGKIEVNK (154 aa)). His156 contributes to the Zn(2+) binding site. Glu157 is a catalytic residue. His160 and Asp167 together coordinate Zn(2+). One can recognise a VWFA domain in the interval 306–475 (IVCLVLDKSG…NGLIDAFGAL (170 aa)). N-linked (GlcNAc...) asparagine glycosylation is found at Asn503, Asn769, Asn803, Asn809, Asn830, Asn835, Asn885, and Asn889. A disordered region spans residues 866 to 885 (PPQTPPETPSPDETSAPCPN).

The protein belongs to the CLCR family. In terms of processing, glycosylated. The translation product is autoproteolytically cleaved by the metalloprotease domain in the endoplasmic reticulum into a N-terminal and a C-terminal products that remain physically associated with each other. The cleavage is necessary for calcium-activated chloride channel (CaCC) activation activity.

The protein resides in the secreted. Its subcellular location is the extracellular space. In terms of biological role, may be involved in mediating calcium-activated chloride conductance. May play critical roles in goblet cell metaplasia, mucus hypersecretion, cystic fibrosis and AHR. May be involved in the regulation of mucus production and/or secretion by goblet cells. Involved in the regulation of tissue inflammation in the innate immune response. May play a role as a tumor suppressor. Induces MUC5AC. The protein is Calcium-activated chloride channel regulator 1 (CLCA1) of Macaca mulatta (Rhesus macaque).